We begin with the raw amino-acid sequence, 258 residues long: MYTTGLIGKNINYSESPEIHNNYYKKNNIPFFYKIFNLNQDQIDYFIKNLHKNNIKGFNVTIPYKETILQYLNDIVYPADKIGAVNTVVVQEDKLIGYNTDYIGFIKSLQYYNIQVKNFKCLIIGSGGSAKCIYYALKELNAGDICIVSRNPEKARLKFEKKVKILNIKDENKLDRYDLIVNCTPIGGPNFREQKPVKLKEVKKNCVVYDLNYTPKRSKLLKEAKENGAFIINGEKMLIFQAYSAIGLWCLNGIKGGR.

Shikimate contacts are provided by residues 14–16 (SES) and T61. The active-site Proton acceptor is K65. The shikimate site is built by N86 and D101. NADP(+) contacts are provided by residues 125 to 129 (GSGGS) and L211. Y213 contacts shikimate. G234 lines the NADP(+) pocket.

This sequence belongs to the shikimate dehydrogenase family. As to quaternary structure, homodimer.

The catalysed reaction is shikimate + NADP(+) = 3-dehydroshikimate + NADPH + H(+). It functions in the pathway metabolic intermediate biosynthesis; chorismate biosynthesis; chorismate from D-erythrose 4-phosphate and phosphoenolpyruvate: step 4/7. Involved in the biosynthesis of the chorismate, which leads to the biosynthesis of aromatic amino acids. Catalyzes the reversible NADPH linked reduction of 3-dehydroshikimate (DHSA) to yield shikimate (SA). The sequence is that of Shikimate dehydrogenase (NADP(+)) from Clostridium botulinum (strain Loch Maree / Type A3).